The primary structure comprises 264 residues: Glutamate racemase (264 aa).

Substrate is bound by residues 10 to 11 (DS) and 42 to 43 (YG). C73 acts as the Proton donor/acceptor in catalysis. 74 to 75 (NT) is a substrate binding site. The active-site Proton donor/acceptor is the C183. Position 184–185 (184–185 (TH)) interacts with substrate.

This sequence belongs to the aspartate/glutamate racemases family.

It catalyses the reaction L-glutamate = D-glutamate. It functions in the pathway cell wall biogenesis; peptidoglycan biosynthesis. In terms of biological role, provides the (R)-glutamate required for cell wall biosynthesis. This is Glutamate racemase from Streptococcus mutans serotype c (strain ATCC 700610 / UA159).